Here is an 853-residue protein sequence, read N- to C-terminus: Lysine-specific histone demethylase 1A (853 aa).

Residues 1-177 (MLSGKKAAAA…EPEEPSGVEG (177 aa)) are disordered. Residues 7 to 26 (AAAAAAAAAAAAAAGTEAGS) show a composition bias toward low complexity. T60 is modified (phosphothreonine). The span at 76-97 (AEPPGSAGPQAGPTAGPGSATP) shows a compositional bias: low complexity. Residue T105 is modified to Phosphothreonine. The stretch at 111-152 (TSRRKRAKVEYREMDESLANLSEDEYYSEEERNAKAEKEKKL) forms a coiled coil. Phosphoserine occurs at positions 127 and 132. Y136 is subject to Phosphotyrosine. A Phosphoserine modification is found at S138. Residues 139-152 (EEERNAKAEKEKKL) are compositionally biased toward basic and acidic residues. Positions 161 to 173 (PEEENESEPEEPS) are enriched in acidic residues. At S167 the chain carries Phosphoserine. In terms of domain architecture, SWIRM spans 175–274 (VEGAAFQSRL…FGIYKRIKPL (100 aa)). Residues S290, E309, R311, R317, and 333–334 (MV) contribute to the FAD site. The segment at 301 to 853 (FGMDVTLLEA…GVPAQQSPSM (553 aa)) is demethylase activity. The stretch at 429–515 (IEHWKKIVKT…EEKLQELEAN (87 aa)) forms a coiled coil. 3 positions are modified to N6-acetyllysine: K433, K434, and K437. Glycyl lysine isopeptide (Lys-Gly) (interchain with G-Cter in SUMO2) cross-links involve residues K443 and K470. K504 is covalently cross-linked (Glycyl lysine isopeptide (Lys-Gly) (interchain with G-Cter in ubiquitin)). At S612 the chain carries Phosphoserine. Residues E802 and 811-812 (TV) contribute to the FAD site. The residue at position 850 (S850) is a Phosphoserine.

It belongs to the flavin monoamine oxidase family. Component of a histone demethylase complex with RCOR1. Component of a BHC histone deacetylase complex that contains HDAC1, HDAC2, HMG20B, KDM1A, RCOR1 and PHF21A. The BHC complex may also contain ZMYM2, ZNF217, ZMYM3, GSE1 and GTF2I. In the complex, RCOR1 strongly enhances the demethylase activity and protects it from the proteasome while PHF21A inhibits the demethylase activity. Interacts with the androgen receptor (AR). Component of a RCOR/GFI/KDM1A/HDAC complex. Interacts directly with GFI1 and GFI1B. Interacts with SNAI1 (via SNAG domain). Interacts with INSM1. Interacts (via AOD/Tower domain) with JADE2 (via C-terminus). Interacts with ESRRB; co-occupes the core set of ESRRB targets. Interacts with SAMD1 (via WH domain); the interaction modulates KDM1A function. Interacts with RBPJ. Interacts with L3MBTL3. Interacts with ZMYND8. The cofactor is FAD. Post-translationally, acetylated by KAT8 in epithelial but not in mesenchymal cells, thereby regulating the epithelial-to-mesenchymal transition. Acetylation by KAT8 reduces KDM1A association with nucleosomes, thereby decreasing histone H3 demethylation, leading to transcription activatio of target genes. Polyubiquitinated by JADE2; which leads to its proteasomal degradation. Deubiquitinated by USP38; preventing it from degradation by the 26S proteasome. As to expression, ubiquitously expressed.

The protein resides in the nucleus. It localises to the chromosome. The enzyme catalyses N(6),N(6)-dimethyl-L-lysyl(4)-[histone H3] + 2 A + 2 H2O = L-lysyl(4)-[histone H3] + 2 formaldehyde + 2 AH2. Its activity is regulated as follows. The N-terminal sequences of INSM1 and SNAI1 compete with histone H3 for the same binding site and thereby inhibit histone demethylation (in vitro). Functionally, histone demethylase that can demethylate both 'Lys-4' (H3K4me) and 'Lys-9' (H3K9me) of histone H3, thereby acting as a coactivator or a corepressor, depending on the context. Acts by oxidizing the substrate by FAD to generate the corresponding imine that is subsequently hydrolyzed. Acts as a corepressor by mediating demethylation of H3K4me, a specific tag for epigenetic transcriptional activation. Demethylates both mono- (H3K4me1) and di-methylated (H3K4me2) H3K4me. May play a role in the repression of neuronal genes. Alone, it is unable to demethylate H3K4me on nucleosomes and requires the presence of RCOR1/CoREST to achieve such activity. Also acts as a coactivator of androgen receptor (ANDR)-dependent transcription, by being recruited to ANDR target genes and mediating demethylation of H3K9me, a specific tag for epigenetic transcriptional repression. The presence of PRKCB in ANDR-containing complexes, which mediates phosphorylation of 'Thr-6' of histone H3 (H3T6ph), a specific tag that prevents demethylation H3K4me, prevents H3K4me demethylase activity of KDM1A. Demethylates di-methylated 'Lys-370' of p53/TP53 which prevents interaction of p53/TP53 with TP53BP1 and represses p53/TP53-mediated transcriptional activation. Demethylates and stabilizes the DNA methylase DNMT1. Demethylates methylated 'Lys-44' and methylated 'Lys-119' of SOX2. Required for gastrulation during embryogenesis. Component of a RCOR/GFI/KDM1A/HDAC complex that suppresses, via histone deacetylase (HDAC) recruitment, a number of genes implicated in multilineage blood cell development. Facilitates epithelial-to-mesenchymal transition by acting as an effector of SNAI1-mediated transcription repression of epithelial markers E-cadherin/CDH1, CDN7 and KRT8. Required for the maintenance of the silenced state of the SNAI1 target genes E-cadherin/CDH1 and CDN7. Required for the repression of GIPR expression. In Mus musculus (Mouse), this protein is Lysine-specific histone demethylase 1A.